The following is a 151-amino-acid chain: Ribosome maturation factor RimP (151 aa).

It belongs to the RimP family.

It is found in the cytoplasm. Functionally, required for maturation of 30S ribosomal subunits. The protein is Ribosome maturation factor RimP of Shewanella putrefaciens (strain CN-32 / ATCC BAA-453).